A 133-amino-acid polypeptide reads, in one-letter code: Large ribosomal subunit protein bL19 (133 aa).

Belongs to the bacterial ribosomal protein bL19 family.

Its function is as follows. This protein is located at the 30S-50S ribosomal subunit interface and may play a role in the structure and function of the aminoacyl-tRNA binding site. In Stenotrophomonas maltophilia (strain R551-3), this protein is Large ribosomal subunit protein bL19.